The primary structure comprises 93 residues: Small ribosomal subunit protein uS19 (93 aa).

It belongs to the universal ribosomal protein uS19 family.

Functionally, protein S19 forms a complex with S13 that binds strongly to the 16S ribosomal RNA. This Symbiobacterium thermophilum (strain DSM 24528 / JCM 14929 / IAM 14863 / T) protein is Small ribosomal subunit protein uS19.